The following is a 377-amino-acid chain: Nucleoside diphosphate kinase homolog 7 (377 aa).

The DM10 domain occupies 3–91; sequence HSERFVFIAE…YTARQLGSKK (89 aa).

The protein belongs to the NDK family. As to quaternary structure, component of sperm flagellar doublet microtubules. Component of the gamma-tubulin ring complex. Expressed in trachea multiciliated cells.

It localises to the cytoplasm. The protein resides in the cytoskeleton. The protein localises to the microtubule organizing center. Its subcellular location is the centrosome. It is found in the nucleus. It localises to the spindle. The protein resides in the cilium axoneme. The protein localises to the flagellum axoneme. Its subcellular location is the cell projection. It is found in the cilium. Functionally, possesses an intrinsic kinase activity. Displays 3'-5' exonuclease activity with a preference for single-stranded DNA. Does not seem to have nucleoside diphosphate kinase activity. Functional component of the gamma-tubulin ring complex, implicated in the regulation of the microtubule-nucleating activity of the gamma-tubulin ring complex in centrosomes, in a kinase activity-dependent manner. Part of the dynein-decorated doublet microtubules (DMTs) in cilia axoneme, which is required for motile cilia beating. This is Nucleoside diphosphate kinase homolog 7 (NME7) from Bos taurus (Bovine).